A 270-amino-acid polypeptide reads, in one-letter code: Putative phosphoenolpyruvate synthase regulatory protein (270 aa).

Residue 150-157 coordinates ADP; that stretch reads GVSRSGKT.

Belongs to the pyruvate, phosphate/water dikinase regulatory protein family. PSRP subfamily.

It carries out the reaction [pyruvate, water dikinase] + ADP = [pyruvate, water dikinase]-phosphate + AMP + H(+). The catalysed reaction is [pyruvate, water dikinase]-phosphate + phosphate + H(+) = [pyruvate, water dikinase] + diphosphate. Its function is as follows. Bifunctional serine/threonine kinase and phosphorylase involved in the regulation of the phosphoenolpyruvate synthase (PEPS) by catalyzing its phosphorylation/dephosphorylation. This chain is Putative phosphoenolpyruvate synthase regulatory protein, found in Cupriavidus metallidurans (strain ATCC 43123 / DSM 2839 / NBRC 102507 / CH34) (Ralstonia metallidurans).